The following is an 892-amino-acid chain: Integrator complex subunit 6 (892 aa).

The VWFA domain occupies 3–227 (ILLFLIDTSA…QCLESLVQKV (225 aa)). The Inhibitory loop motif lies at 630 to 637 (MMIDEADE). 3 disordered regions span residues 665-692 (MSPLLRRPQTPPIITNHVLGKGPTGTQG), 711-754 (VGGT…AAPD), and 771-793 (PDHTQNCEELSPPGQEGEMEVNE).

This sequence belongs to the Integrator subunit 6 family. In terms of assembly, component of the Integrator complex, composed of core subunits INTS1, INTS2, INTS3, INTS4, INTS5, INTS6, INTS7, INTS8, INTS9/RC74, INTS10, INTS11/CPSF3L, INTS12, INTS13, INTS14 and INTS15. The core complex associates with protein phosphatase 2A subunits PPP2CA and PPP2R1A, to form the Integrator-PP2A (INTAC) complex.

The protein localises to the nucleus. It localises to the chromosome. Its function is as follows. Component of the integrator complex, a multiprotein complex that terminates RNA polymerase II (Pol II) transcription in the promoter-proximal region of genes. The integrator complex provides a quality checkpoint during transcription elongation by driving premature transcription termination of transcripts that are unfavorably configured for transcriptional elongation: the complex terminates transcription by (1) catalyzing dephosphorylation of the C-terminal domain (CTD) of Pol II subunit POLR2A/RPB1 and SUPT5H/SPT5, (2) degrading the exiting nascent RNA transcript via endonuclease activity and (3) promoting the release of Pol II from bound DNA. The integrator complex is also involved in terminating the synthesis of non-coding Pol II transcripts, such as enhancer RNAs (eRNAs), small nuclear RNAs (snRNAs), telomerase RNAs and long non-coding RNAs (lncRNAs). Within the integrator complex, INTS6 acts as a molecular adapter that promotes assembly of protein phosphatase 2A (PP2A) subunits to the integrator core complex, promoting recruitment of PP2A to transcription pause-release checkpoint. In Danio rerio (Zebrafish), this protein is Integrator complex subunit 6 (ints6l).